Consider the following 162-residue polypeptide: Ribosomal RNA large subunit methyltransferase H (162 aa).

S-adenosyl-L-methionine-binding positions include Leu78, Gly109, and 128 to 133 (LSALTL).

The protein belongs to the RNA methyltransferase RlmH family. Homodimer.

It localises to the cytoplasm. The enzyme catalyses pseudouridine(1915) in 23S rRNA + S-adenosyl-L-methionine = N(3)-methylpseudouridine(1915) in 23S rRNA + S-adenosyl-L-homocysteine + H(+). Specifically methylates the pseudouridine at position 1915 (m3Psi1915) in 23S rRNA. The chain is Ribosomal RNA large subunit methyltransferase H from Psychrobacter cryohalolentis (strain ATCC BAA-1226 / DSM 17306 / VKM B-2378 / K5).